The primary structure comprises 340 residues: Ferrochelatase (340 aa).

Fe cation-binding residues include histidine 189 and glutamate 292.

It belongs to the ferrochelatase family.

The protein localises to the cytoplasm. The catalysed reaction is heme b + 2 H(+) = protoporphyrin IX + Fe(2+). The protein operates within porphyrin-containing compound metabolism; protoheme biosynthesis; protoheme from protoporphyrin-IX: step 1/1. In terms of biological role, catalyzes the ferrous insertion into protoporphyrin IX. In Pseudomonas aeruginosa (strain UCBPP-PA14), this protein is Ferrochelatase.